We begin with the raw amino-acid sequence, 587 residues long: L-ascorbate oxidase (587 aa).

Residues 1 to 33 (MAKVADKPFFPKPFLSFLVLSIIFGFGITLSEA) form the signal peptide. 2 consecutive Plastocyanin-like domains span residues 38–157 (IKHY…LIVD) and 169–335 (DEEI…NYLP). Intrachain disulfides connect Cys54–Cys236, Cys116–Cys574, and Cys215–Cys228. Residues His95, His97, His139, and His141 each coordinate Cu cation. N-linked (GlcNAc...) asparagine glycosylation is found at Asn360, Asn401, and Asn475. Residues 379 to 559 (NRRLFLLNTQ…HMGMGVVFAE (181 aa)) enclose the Plastocyanin-like 3 domain. The Cu cation site is built by His480, His483, His485, His542, Cys543, His544, His548, and Met553.

It belongs to the multicopper oxidase family. As to quaternary structure, dimer. It depends on Cu cation as a cofactor.

It localises to the secreted. The catalysed reaction is 4 L-ascorbate + O2 = 4 monodehydro-L-ascorbate radical + 2 H2O. Functionally, may be involved in a redox system involving ascorbic acid. This is L-ascorbate oxidase from Cucumis sativus (Cucumber).